The sequence spans 305 residues: Mitochondrial uncoupling protein 2 (305 aa).

Solcar repeat units lie at residues 10-104 (ISFL…VKTL), 114-205 (IPLY…IKET), and 214-297 (DSVL…VKKV). 6 consecutive transmembrane segments (helical) span residues 16 to 36 (FICS…LDTA), 73 to 93 (ISGL…YGGL), 120 to 140 (ILAA…TDLV), 179 to 199 (TGLG…LASY), 220 to 240 (LLAG…IDVV), and 270 to 290 (YKGF…MFLT).

It belongs to the mitochondrial carrier (TC 2.A.29) family.

It localises to the mitochondrion inner membrane. Functionally, PUMPS are mitochondrial transporter proteins that create proton leaks across the inner mitochondrial membrane, thus uncoupling oxidative phosphorylation. This leads to a decrease in the efficiency of oxidative phosphorylation and an increase in heat production. May be involved in protecting plant cells against oxidative stress damage. This is Mitochondrial uncoupling protein 2 (PUMP2) from Arabidopsis thaliana (Mouse-ear cress).